We begin with the raw amino-acid sequence, 174 residues long: Cytochrome c-type biogenesis protein CcmE (174 aa).

Over 1–8 the chain is Cytoplasmic; the sequence is MNPRRKSR. The chain crosses the membrane as a helical; Signal-anchor for type II membrane protein span at residues 9–29; it reads LSVVLFIFLGISVASALVLYA. Over 30–174 the chain is Periplasmic; it reads LRQNIDLFYT…QEKQFKEGNQ (145 aa). Residues histidine 131 and tyrosine 135 each contribute to the heme site. The segment at 149-174 is disordered; it reads KPMGISDLKNESDRDRQEKQFKEGNQ. A compositionally biased stretch (basic and acidic residues) spans 156–174; it reads LKNESDRDRQEKQFKEGNQ.

Belongs to the CcmE/CycJ family.

It localises to the cell inner membrane. In terms of biological role, heme chaperone required for the biogenesis of c-type cytochromes. Transiently binds heme delivered by CcmC and transfers the heme to apo-cytochromes in a process facilitated by CcmF and CcmH. The chain is Cytochrome c-type biogenesis protein CcmE from Histophilus somni (strain 129Pt) (Haemophilus somnus).